A 104-amino-acid polypeptide reads, in one-letter code: ATP-dependent Clp protease adapter protein ClpS (104 aa).

The protein belongs to the ClpS family. As to quaternary structure, binds to the N-terminal domain of the chaperone ClpA.

Its function is as follows. Involved in the modulation of the specificity of the ClpAP-mediated ATP-dependent protein degradation. The chain is ATP-dependent Clp protease adapter protein ClpS from Neisseria gonorrhoeae (strain ATCC 700825 / FA 1090).